The chain runs to 66 residues: uncharacterized protein (66 aa).

2 helical membrane passes run 3–23 (LIHVLAALPFIGILLGIPFAN) and 34–54 (FILAYIVMWALLTSALMAIVY).

The protein localises to the cell membrane. This is an uncharacterized protein from Bacillus subtilis (strain 168).